The chain runs to 128 residues: Large ribosomal subunit protein bL12c (128 aa).

The tract at residues 103–128 (QEGLGKDAAEDAKKQIEDAGGKVSLT) is disordered. A compositionally biased stretch (basic and acidic residues) spans 106-122 (LGKDAAEDAKKQIEDAG).

The protein belongs to the bacterial ribosomal protein bL12 family. Homodimer. Part of the ribosomal stalk of the 50S ribosomal subunit. Forms a multimeric L10(L12)X complex, where L10 forms an elongated spine to which 2 to 4 L12 dimers bind in a sequential fashion. Binds GTP-bound translation factors.

It is found in the plastid. It localises to the chloroplast. In terms of biological role, forms part of the ribosomal stalk which helps the ribosome interact with GTP-bound translation factors. Is thus essential for accurate translation. The chain is Large ribosomal subunit protein bL12c from Thalassiosira pseudonana (Marine diatom).